The following is a 366-amino-acid chain: Peroxisomal (S)-2-hydroxy-acid oxidase GLO4 (366 aa).

Residues 1 to 360 (MEDNLPVNVR…TRSHVMTEGD (360 aa)) form the FMN hydroxy acid dehydrogenase domain. Tyr-27 contacts a 2-oxocarboxylate. FMN contacts are provided by residues 80–82 (PTG), Ser-109, 130–132 (QLY), and Thr-158. Tyr-132 is an a 2-oxocarboxylate binding site. Residue Arg-167 coordinates a 2-oxocarboxylate. FMN contacts are provided by Lys-231 and Ser-253. Catalysis depends on His-255, which acts as the Proton acceptor. Arg-258 lines the a 2-oxocarboxylate pocket. Residues 286-290 (DGGIR) and 309-310 (XX) each bind FMN. The Microbody targeting signal motif lies at 364-366 (SLL).

Belongs to the FMN-dependent alpha-hydroxy acid dehydrogenase family. In terms of assembly, homotetramer. Requires FMN as cofactor.

It is found in the peroxisome. The enzyme catalyses a (2S)-2-hydroxycarboxylate + O2 = a 2-oxocarboxylate + H2O2. It functions in the pathway lipid metabolism; fatty acid metabolism. Its function is as follows. Oxidase that catalyzes the oxidation of a broad range of 2-hydroxyacids to the corresponding 2-oxoacids, with a reduction of O2 to H2O2. May be involved in a general medium- and long-chain fatty acid catabolic pathway such as alpha-oxidation. The sequence is that of Peroxisomal (S)-2-hydroxy-acid oxidase GLO4 (GLO4) from Oryza sativa subsp. indica (Rice).